Consider the following 695-residue polypeptide: Calcium-dependent serine proteinase (695 aa).

A signal peptide spans 1-21 (MGKSSEAWCIVLFSVFASFSA). Residues 22 to 136 (EPTMHGEILS…TGFAAYYAAI (115 aa)) form the CUB 1 domain. 4 cysteine pairs are disulfide-bonded: cysteine 71-cysteine 89, cysteine 141-cysteine 153, cysteine 149-cysteine 162, and cysteine 164-cysteine 177. The EGF-like; calcium-binding domain maps to 137–178 (DVNECTDFTDVPCSHFCNNFIGGYFCSCPPEYFLHDDMRNCG). Asparagine 155 carries the (3R)-3-hydroxyasparagine modification. Asparagine 180 is a glycosylation site (N-linked (GlcNAc...) asparagine). Cystine bridges form between cysteine 181/cysteine 208, cysteine 240/cysteine 257, cysteine 300/cysteine 347, cysteine 327/cysteine 360, cysteine 365/cysteine 410, and cysteine 392/cysteine 428. The region spanning 181 to 296 (CSGNVFTALI…KGWKLRYHGD (116 aa)) is the CUB 2 domain. Sushi domains are found at residues 298–362 (IPCP…RCQP) and 363–430 (VDCG…KCVP). Asparagine 413 carries an N-linked (GlcNAc...) asparagine glycan. Residues 445–687 (IFGGFPAKIQ…YKDWILQTMQ (243 aa)) form the Peptidase S1 domain. Residues histidine 482 and aspartate 536 each act as charge relay system in the active site. Disulfide bonds link cysteine 602–cysteine 625 and cysteine 634–cysteine 666. Serine 638 serves as the catalytic Charge relay system.

It belongs to the peptidase S1 family. In terms of assembly, heterodimer, consisting of heavy and light chains with disulfide bonds. The heavy chain is expected to be a regulatory subunit and the light chain contains the catalytic site. Post-translationally, the iron and 2-oxoglutarate dependent 3-hydroxylation of aspartate and asparagine is (R) stereospecific within EGF domains.

The protein localises to the secreted. Its subcellular location is the extracellular space. It is found in the extracellular matrix. In terms of biological role, capable of degrading extracellular matrix proteins. CASP degrades type I and IV collagen and fibronectin in the presence of calcium. This Mesocricetus auratus (Golden hamster) protein is Calcium-dependent serine proteinase.